The chain runs to 192 residues: UPF0149 protein YPO0911/y3298/YP_3608 (192 aa).

Belongs to the UPF0149 family.

This chain is UPF0149 protein YPO0911/y3298/YP_3608, found in Yersinia pestis.